Here is a 98-residue protein sequence, read N- to C-terminus: ESAT-6-like protein EsxK (98 aa).

It belongs to the WXG100 family. CFP-10 subfamily. In terms of assembly, strongly interacts with EsxL to form a heterodimeric complex under reducing conditions.

It is found in the secreted. This is ESAT-6-like protein EsxK from Mycobacterium tuberculosis (strain CDC 1551 / Oshkosh).